Consider the following 396-residue polypeptide: Smad nuclear-interacting protein 1 (396 aa).

Basic and acidic residues predominate over residues 1 to 10 (MKAVKSERER). A disordered region spans residues 1-227 (MKAVKSERER…VPAKEKPSFE (227 aa)). Residue lysine 30 forms a Glycyl lysine isopeptide (Lys-Gly) (interchain with G-Cter in SUMO); alternate linkage. A Glycyl lysine isopeptide (Lys-Gly) (interchain with G-Cter in SUMO1); alternate cross-link involves residue lysine 30. A Glycyl lysine isopeptide (Lys-Gly) (interchain with G-Cter in SUMO2); alternate cross-link involves residue lysine 30. Phosphoserine occurs at positions 35, 49, 52, and 54. Threonine 57 bears the Phosphothreonine mark. Phosphoserine occurs at positions 58 and 99. Over residues 77–105 (PPKKKNKASGRRSKSPRSKRNRSPHHSTV) the composition is skewed to basic residues. The segment covering 107-142 (VKQEREDHPRRGREDRQHREPSEQEHRRARNSDRDR) has biased composition (basic and acidic residues). Lysine 108 is covalently cross-linked (Glycyl lysine isopeptide (Lys-Gly) (interchain with G-Cter in SUMO2)). Residue serine 153 is modified to Phosphoserine. Positions 165–196 (RDRDTQNLQAQEEEREFYNARRREHRQRNDVG) form a coiled coil. Serine 202 is modified (phosphoserine). A compositionally biased stretch (basic and acidic residues) spans 213 to 225 (NKEKEVPAKEKPS). A Glycyl lysine isopeptide (Lys-Gly) (interchain with G-Cter in SUMO2) cross-link involves residue lysine 223. The FHA domain occupies 281–344 (YLLGRHRRIA…NGTFLNNKRI (64 aa)). Residues 373–382 (SSDTSEIDRK) show a composition bias toward basic and acidic residues. The tract at residues 373–396 (SSDTSEIDRKDDEDEEEEEEVSDS) is disordered. Positions 383–396 (DDEDEEEEEEVSDS) are enriched in acidic residues. Serine 394 is modified (phosphoserine).

In terms of assembly, component of activated spliceosome complexes. Component of the minor spliceosome, which splices U12-type introns. Binds SMAD4 and CREBBP/EP300. Binds the SMAD1/OAZ1/PSMB4 complex. Interacts with DROSHA and SMARCA4. Component of the SNARP complex which consists at least of SNIP1, SNW1, THRAP3, BCLAF1 and PNN. In terms of processing, degraded by the proteasome upon binding to the SMAD1/OAZ1/PSMB4 complex. Ubiquitous, with highest expression in heart and skeletal muscle.

It is found in the nucleus. Functionally, required for pre-mRNA splicing as component of the spliceosome. As a component of the minor spliceosome, involved in the splicing of U12-type introns in pre-mRNAs. Down-regulates NF-kappa-B signaling by competing with RELA for CREBBP/EP300 binding. Involved in the microRNA (miRNA) biogenesis. May be involved in cyclin-D1/CCND1 mRNA stability through the SNARP complex which associates with both the 3'end of the CCND1 gene and its mRNA. The sequence is that of Smad nuclear-interacting protein 1 (SNIP1) from Homo sapiens (Human).